Reading from the N-terminus, the 1213-residue chain is DNA-directed RNA polymerase subunit beta' (1213 aa).

Residues cysteine 60, cysteine 62, cysteine 75, and cysteine 78 each coordinate Zn(2+). Aspartate 449, aspartate 451, and aspartate 453 together coordinate Mg(2+). Residues cysteine 818, cysteine 892, cysteine 899, and cysteine 902 each contribute to the Zn(2+) site.

The protein belongs to the RNA polymerase beta' chain family. As to quaternary structure, the RNAP catalytic core consists of 2 alpha, 1 beta, 1 beta' and 1 omega subunit. When a sigma factor is associated with the core the holoenzyme is formed, which can initiate transcription. It depends on Mg(2+) as a cofactor. Requires Zn(2+) as cofactor.

It carries out the reaction RNA(n) + a ribonucleoside 5'-triphosphate = RNA(n+1) + diphosphate. Its function is as follows. DNA-dependent RNA polymerase catalyzes the transcription of DNA into RNA using the four ribonucleoside triphosphates as substrates. This is DNA-directed RNA polymerase subunit beta' from Lactiplantibacillus plantarum (strain ATCC BAA-793 / NCIMB 8826 / WCFS1) (Lactobacillus plantarum).